A 215-amino-acid polypeptide reads, in one-letter code: UPF0502 protein PP_2442 (215 aa).

The protein belongs to the UPF0502 family.

This is UPF0502 protein PP_2442 from Pseudomonas putida (strain ATCC 47054 / DSM 6125 / CFBP 8728 / NCIMB 11950 / KT2440).